The chain runs to 254 residues: Cytokine-inducible SH2-containing protein (254 aa).

An SH2 domain is found at 82–188 (WYWGSITASE…ATTPALPTPK (107 aa)). The interval 171–195 (TRSDSPDLATTPALPTPKEDAPGDP) is disordered. The 49-residue stretch at 205–253 (KLVQPFVRRSSTRSLQHLCRLVINRLVVDVDCLPLPRRMADYLRQYPFQ) folds into the SOCS box domain.

In terms of assembly, stably associated with the tyrosine-phosphorylated IL3 receptor beta chain and tyrosine-phosphorylated EPO receptor (EPOR).

Its pathway is protein modification; protein ubiquitination. Functionally, SOCS family proteins form part of a classical negative feedback system that regulates cytokine signal transduction. CIS is involved in the negative regulation of cytokines that signal through the JAK-STAT5 pathway such as erythropoietin, prolactin and interleukin 3 (IL3) receptor. Inhibits STAT5 trans-activation by suppressing its tyrosine phosphorylation. May be a substrate recognition component of a SCF-like ECS (Elongin BC-CUL2/5-SOCS-box protein) E3 ubiquitin-protein ligase complex which mediates the ubiquitination and subsequent proteasomal degradation of target proteins. The sequence is that of Cytokine-inducible SH2-containing protein (CISH) from Bos taurus (Bovine).